The sequence spans 209 residues: dITP/XTP pyrophosphatase (209 aa).

7 to 12 provides a ligand contact to substrate; it reads SSHGYK. The Proton acceptor role is filled by aspartate 70. Aspartate 70 contributes to the Mg(2+) binding site. Substrate is bound by residues serine 71, 154–157, lysine 177, and 182–183; these read FGYD and HR.

The protein belongs to the HAM1 NTPase family. As to quaternary structure, homodimer. Mg(2+) serves as cofactor.

The enzyme catalyses XTP + H2O = XMP + diphosphate + H(+). It carries out the reaction dITP + H2O = dIMP + diphosphate + H(+). The catalysed reaction is ITP + H2O = IMP + diphosphate + H(+). Pyrophosphatase that catalyzes the hydrolysis of nucleoside triphosphates to their monophosphate derivatives, with a high preference for the non-canonical purine nucleotides XTP (xanthosine triphosphate), dITP (deoxyinosine triphosphate) and ITP. Seems to function as a house-cleaning enzyme that removes non-canonical purine nucleotides from the nucleotide pool, thus preventing their incorporation into DNA/RNA and avoiding chromosomal lesions. The sequence is that of dITP/XTP pyrophosphatase from Chlamydia trachomatis serovar L2 (strain ATCC VR-902B / DSM 19102 / 434/Bu).